A 239-amino-acid polypeptide reads, in one-letter code: MTLALQYKRILLKVSGEALMGGQSFGIDVFVADRIATDIAEVRAMGVEVAIVIGGGNIFRGVAVASHGGDRVTGDHMGMLATAINSLALRTSLTKLGVETVVLSAVAMPQICESFSQRKAIGYMNQGKVVIFAGGTGNPFFTTDSAATLRAAEIGADVLLKGTQVDGIYSADPKIDPTAKRFDQLTHVEILQWGLSVMDTTAVTLARENNVPIIVYSIHEKGGLAKVLNGTGRFTMVSE.

Lys13–Gly16 contributes to the ATP binding site. Gly55 is a UMP binding site. ATP-binding residues include Gly56 and Arg60. Residues Asp75 and Thr136–Thr143 each bind UMP. Thr163, Gln164, Tyr169, and Asp172 together coordinate ATP.

This sequence belongs to the UMP kinase family. As to quaternary structure, homohexamer.

It localises to the cytoplasm. It carries out the reaction UMP + ATP = UDP + ADP. It functions in the pathway pyrimidine metabolism; CTP biosynthesis via de novo pathway; UDP from UMP (UMPK route): step 1/1. Inhibited by UTP. Its function is as follows. Catalyzes the reversible phosphorylation of UMP to UDP. In Bartonella quintana (strain Toulouse) (Rochalimaea quintana), this protein is Uridylate kinase.